The chain runs to 793 residues: Sucrose synthase (793 aa).

The interval 259–738 is GT-B glycosyltransferase; the sequence is MILNIAIISP…AIKRVTEKYS (480 aa).

Belongs to the glycosyltransferase 1 family. As to quaternary structure, homotetramer.

The enzyme catalyses an NDP-alpha-D-glucose + D-fructose = a ribonucleoside 5'-diphosphate + sucrose + H(+). Its function is as follows. Catalyzes the reversible conversion of sucrose and a nucleotide disphosphate (NDP) into fructose and NDP-glucose; although the reaction is freely reversible in vitro, the physiological reaction seems to be sucrose cleavage. Unlike characterized plant enzymes prefers ADP as a cosubstrate, whereas plants prefer UDP. Its preference for ADP over UDP suggests it may directly link sucrose and glycogen metabolism. The protein is Sucrose synthase of Melioribacter roseus (strain JCM 17771 / P3M-2).